A 545-amino-acid polypeptide reads, in one-letter code: Glucose-6-phosphate isomerase (545 aa).

The active-site Proton donor is Glu-351. Active-site residues include His-382 and Lys-510.

The protein belongs to the GPI family.

It is found in the cytoplasm. The catalysed reaction is alpha-D-glucose 6-phosphate = beta-D-fructose 6-phosphate. It participates in carbohydrate biosynthesis; gluconeogenesis. Its pathway is carbohydrate degradation; glycolysis; D-glyceraldehyde 3-phosphate and glycerone phosphate from D-glucose: step 2/4. Functionally, catalyzes the reversible isomerization of glucose-6-phosphate to fructose-6-phosphate. This Shewanella oneidensis (strain ATCC 700550 / JCM 31522 / CIP 106686 / LMG 19005 / NCIMB 14063 / MR-1) protein is Glucose-6-phosphate isomerase.